The primary structure comprises 339 residues: Phenylalanine--tRNA ligase alpha subunit (339 aa).

A Mg(2+)-binding site is contributed by E254.

This sequence belongs to the class-II aminoacyl-tRNA synthetase family. Phe-tRNA synthetase alpha subunit type 1 subfamily. In terms of assembly, tetramer of two alpha and two beta subunits. Mg(2+) serves as cofactor.

The protein localises to the cytoplasm. It carries out the reaction tRNA(Phe) + L-phenylalanine + ATP = L-phenylalanyl-tRNA(Phe) + AMP + diphosphate + H(+). In Clostridium perfringens (strain ATCC 13124 / DSM 756 / JCM 1290 / NCIMB 6125 / NCTC 8237 / Type A), this protein is Phenylalanine--tRNA ligase alpha subunit.